An 847-amino-acid polypeptide reads, in one-letter code: Alanine--tRNA ligase (847 aa).

Zn(2+) is bound by residues His554, His558, Cys656, and His660.

It belongs to the class-II aminoacyl-tRNA synthetase family. Zn(2+) is required as a cofactor.

The protein localises to the cytoplasm. The enzyme catalyses tRNA(Ala) + L-alanine + ATP = L-alanyl-tRNA(Ala) + AMP + diphosphate. In terms of biological role, catalyzes the attachment of alanine to tRNA(Ala) in a two-step reaction: alanine is first activated by ATP to form Ala-AMP and then transferred to the acceptor end of tRNA(Ala). Also edits incorrectly charged Ser-tRNA(Ala) and Gly-tRNA(Ala) via its editing domain. The chain is Alanine--tRNA ligase from Helicobacter acinonychis (strain Sheeba).